The chain runs to 161 residues: MSEKVESKGLADAARDHLAAELARLRQRRDRLEVEVKNDRGMIGDHGDAAEAIQRADELAILGDRINELDRRLRTGPTPWSGSETLPGGTEVTLRFPDGEVVTMHVISVVEETPVGREAETLTARSPLGQALAGHQPGDTVTYSTPQGPNQVQLLAVKLPS.

This is an uncharacterized protein from Mycobacterium bovis (strain ATCC BAA-935 / AF2122/97).